The sequence spans 269 residues: Chymotrypsin-like elastase family member 2A (269 aa).

The N-terminal stretch at 1-16 (MIRALLLSTLVAGALS) is a signal peptide. The propeptide at 17–28 (CGLPANLPQLPR) is activation peptide. One can recognise a Peptidase S1 domain in the interval 29 to 267 (VVGGEDARPN…YIDWINSVIA (239 aa)). A disulfide bridge connects residues C58 and C74. Active-site charge relay system residues include H73 and D121. Intrachain disulfides connect C155–C222, C186–C202, and C212–C243. The Charge relay system role is filled by S216.

Belongs to the peptidase S1 family. Elastase subfamily. In terms of assembly, interacts with CPA1. Interacts with SERPINA1. As to expression, pancreas.

The protein localises to the secreted. It catalyses the reaction Preferential cleavage: Leu-|-Xaa, Met-|-Xaa and Phe-|-Xaa. Hydrolyzes elastin.. Functionally, elastase that enhances insulin signaling and might have a physiologic role in cellular glucose metabolism. Circulates in plasma and reduces platelet hyperactivation, triggers both insulin secretion and degradation, and increases insulin sensitivity. The protein is Chymotrypsin-like elastase family member 2A (CELA2A) of Sus scrofa (Pig).